We begin with the raw amino-acid sequence, 147 residues long: Large ribosomal subunit protein bL9 (147 aa).

Belongs to the bacterial ribosomal protein bL9 family.

Binds to the 23S rRNA. The polypeptide is Large ribosomal subunit protein bL9 (Clostridium novyi (strain NT)).